We begin with the raw amino-acid sequence, 219 residues long: Deoxyribose-phosphate aldolase 1 (219 aa).

D87 functions as the Proton donor/acceptor in the catalytic mechanism. K149 functions as the Schiff-base intermediate with acetaldehyde in the catalytic mechanism. The active-site Proton donor/acceptor is the K178.

The protein belongs to the DeoC/FbaB aldolase family. DeoC type 1 subfamily.

The protein localises to the cytoplasm. It carries out the reaction 2-deoxy-D-ribose 5-phosphate = D-glyceraldehyde 3-phosphate + acetaldehyde. It participates in carbohydrate degradation; 2-deoxy-D-ribose 1-phosphate degradation; D-glyceraldehyde 3-phosphate and acetaldehyde from 2-deoxy-alpha-D-ribose 1-phosphate: step 2/2. Catalyzes a reversible aldol reaction between acetaldehyde and D-glyceraldehyde 3-phosphate to generate 2-deoxy-D-ribose 5-phosphate. The polypeptide is Deoxyribose-phosphate aldolase 1 (Vibrio vulnificus (strain YJ016)).